Reading from the N-terminus, the 392-residue chain is Metacaspase-1 (392 aa).

The span at 1–14 shows a compositional bias: polar residues; the sequence is MYPGSGNYSYNNRP. The disordered stretch occupies residues 1–87; the sequence is MYPGSGNYSY…PSSIQQGNGQ (87 aa). Residues 41–51 show a composition bias toward low complexity; sequence QQQQYQDQYQG. A compositionally biased stretch (polar residues) spans 53 to 63; the sequence is NRGQYQGQYQD. Catalysis depends on residues H182 and C238.

This sequence belongs to the peptidase C14B family.

In terms of biological role, involved in cell death (apoptosis). This Candida glabrata (strain ATCC 2001 / BCRC 20586 / JCM 3761 / NBRC 0622 / NRRL Y-65 / CBS 138) (Yeast) protein is Metacaspase-1 (MCA1).